The primary structure comprises 1382 residues: ABC-type transporter atr1 (1382 aa).

Over residues 1 to 12 (MRFRSDSRADHQ) the composition is skewed to basic and acidic residues. A disordered region spans residues 1-56 (MRFRSDSRADHQHPKKQGSMDPDTIQALKYQDRSSSSSSNNKPKEKVGSASTSPSP). N-linked (GlcNAc...) asparagine glycosylation occurs at asparagine 62. Transmembrane regions (helical) follow at residues 101 to 121 (LFGTGMAIAAGAAQPLMNIFI), 159 to 179 (LILLYLGIGMFFASMLYMAVF), 233 to 253 (LPMAIMYFSTFVTAAAVAFAF), 259 to 279 (LVLLPIAPLILLAGGVMGALT), 339 to 359 (GVGVGALLFIIYAGYALAFFY), and 374 to 394 (IVSVVFANFAGAFAIANLFSM). An ABC transmembrane type-1 1 domain is found at 101–400 (LFGTGMAIAA…LFSMIENFTM (300 aa)). A glycan (N-linked (GlcNAc...) asparagine) is linked at asparagine 397. The region spanning 445–688 (LKLDHVHFAY…PNGTFASMLR (244 aa)) is the ABC transporter 1 domain. 480–487 (GLSGSGKS) contributes to the ATP binding site. N-linked (GlcNAc...) asparagine glycosylation occurs at asparagine 680. The tract at residues 738 to 768 (SVKPKDPSKNFEPPGESYASPAADGVKQDAP) is disordered. Residues 797–1094 (LGSLCAAIIG…IFNYSADFSS (298 aa)) enclose the ABC transmembrane type-1 2 domain. A helical transmembrane segment spans residues 800 to 820 (LCAAIIGAVYPVYAILFGTAI). Asparagine 827 carries an N-linked (GlcNAc...) asparagine glycan. The helical transmembrane segment at 848–868 (ISSGSFFIVAVGCAFISFYHV) threads the bilayer. Residue asparagine 903 is glycosylated (N-linked (GlcNAc...) asparagine). A run of 2 helical transmembrane segments spans residues 911-931 (SLSVLSQGIYGGVGPTLGSIV) and 951-973 (LALVVIASTPLTITAGLLRLRVL). N-linked (GlcNAc...) asparagine glycosylation occurs at asparagine 1020. The next 2 helical transmembrane spans lie at 1034-1054 (VLFGLSQCVQLLVTALAFWYG) and 1067-1087 (GFFTILISVVYGSVQAGNIFN). Residues 1136–1377 (IALKEVTFRY…DGLFALMARL (242 aa)) form the ABC transporter 2 domain. 1171 to 1178 (GGSGSGKS) contributes to the ATP binding site. N-linked (GlcNAc...) asparagine glycosylation occurs at asparagine 1324.

Belongs to the ABC transporter superfamily. ABCB family. Multidrug resistance exporter (TC 3.A.1.201) subfamily.

The protein resides in the cell membrane. ABC-type transporter; part of the gene cluster that mediates the biosynthesis of the glycolipid biosurfactant ustilagic acid (UA). UA is a secreted cellobiose glycolipid that is toxic for many microorganisms and confers biocontrol activity to U.maydis. Export of UA is presumably catalyzed by the ABC transporter atr1. Atr1 appears to be quite unspecific, as many of the UA derivatives produced by cluster mutant strains are readily exported. The protein is ABC-type transporter atr1 of Mycosarcoma maydis (Corn smut fungus).